The following is a 755-amino-acid chain: Photosystem I P700 chlorophyll a apoprotein A1 (755 aa).

8 helical membrane-spanning segments follow: residues 72–95, 158–181, 197–221, 297–315, 352–375, 391–417, 439–461, and 536–554; these read IFSA…FHGA, LYCT…FHYH, LNHH…HVSL, TAHH…GHMY, WHAQ…QHMY, LSLF…IFMV, AIIS…LYVH, and FMVH…LILL. 2 residues coordinate [4Fe-4S] cluster: cysteine 578 and cysteine 587. 2 helical membrane-spanning segments follow: residues 594–615 and 669–691; these read HVFL…HFSW and LSAY…MFLF. Chlorophyll a' is bound at residue histidine 680. Chlorophyll a is bound by residues methionine 688 and tyrosine 696. Position 697 (tryptophan 697) interacts with phylloquinone. Residues 729–749 form a helical membrane-spanning segment; sequence AVGVAHYLLGGIATTWAFFLA.

Belongs to the PsaA/PsaB family. In terms of assembly, the PsaA/B heterodimer binds the P700 chlorophyll special pair and subsequent electron acceptors. PSI consists of a core antenna complex that captures photons, and an electron transfer chain that converts photonic excitation into a charge separation. The cyanobacterial PSI reaction center is composed of one copy each of PsaA,B,C,D,E,F,I,J,K,L,M and X, and forms trimeric complexes. Requires PSI electron transfer chain: 5 chlorophyll a, 1 chlorophyll a', 2 phylloquinones and 3 4Fe-4S clusters. PSI core antenna: 90 chlorophyll a, 22 carotenoids, 3 phospholipids and 1 galactolipid. P700 is a chlorophyll a/chlorophyll a' dimer, A0 is one or more chlorophyll a, A1 is one or both phylloquinones and FX is a shared 4Fe-4S iron-sulfur center. as cofactor.

It localises to the cellular thylakoid membrane. The catalysed reaction is reduced [plastocyanin] + hnu + oxidized [2Fe-2S]-[ferredoxin] = oxidized [plastocyanin] + reduced [2Fe-2S]-[ferredoxin]. Functionally, psaA and PsaB bind P700, the primary electron donor of photosystem I (PSI), as well as the electron acceptors A0, A1 and FX. PSI is a plastocyanin/cytochrome c6-ferredoxin oxidoreductase, converting photonic excitation into a charge separation, which transfers an electron from the donor P700 chlorophyll pair to the spectroscopically characterized acceptors A0, A1, FX, FA and FB in turn. Oxidized P700 is reduced on the lumenal side of the thylakoid membrane by plastocyanin or cytochrome c6. This chain is Photosystem I P700 chlorophyll a apoprotein A1, found in Thermostichus vulcanus (Synechococcus vulcanus).